Here is a 278-residue protein sequence, read N- to C-terminus: NAD-capped RNA hydrolase NudC (278 aa).

Arginine 84 contacts substrate. Zn(2+) is bound by residues cysteine 114 and cysteine 117. Position 127 (glutamate 127) interacts with substrate. Cysteine 132 contributes to the Zn(2+) binding site. Tyrosine 140 is a substrate binding site. Residues 141 to 264 (PRISPSMIVL…SIARYLIEAY (124 aa)) form the Nudix hydrolase domain. Alanine 174, glutamate 190, and glutamate 194 together coordinate a divalent metal cation. The Nudix box signature appears at 175 to 196 (GFVEPGESAEDCVHREVMEEVQ). Position 208–215 (208–215 (QCWPFPHS)) interacts with substrate. Glutamate 235 is an a divalent metal cation binding site. Alanine 257 is a binding site for substrate.

The protein belongs to the Nudix hydrolase family. NudC subfamily. Homodimer. Mg(2+) is required as a cofactor. Mn(2+) serves as cofactor. Requires Zn(2+) as cofactor.

The enzyme catalyses a 5'-end NAD(+)-phospho-ribonucleoside in mRNA + H2O = a 5'-end phospho-adenosine-phospho-ribonucleoside in mRNA + beta-nicotinamide D-ribonucleotide + 2 H(+). The catalysed reaction is NAD(+) + H2O = beta-nicotinamide D-ribonucleotide + AMP + 2 H(+). It carries out the reaction NADH + H2O = reduced beta-nicotinamide D-ribonucleotide + AMP + 2 H(+). MRNA decapping enzyme that specifically removes the nicotinamide adenine dinucleotide (NAD) cap from a subset of mRNAs by hydrolyzing the diphosphate linkage to produce nicotinamide mononucleotide (NMN) and 5' monophosphate mRNA. The NAD-cap is present at the 5'-end of some mRNAs and stabilizes RNA against 5'-processing. Has preference for mRNAs with a 5'-end purine. Catalyzes the hydrolysis of a broad range of dinucleotide pyrophosphates. In Pseudomonas syringae pv. syringae (strain B728a), this protein is NAD-capped RNA hydrolase NudC.